A 211-amino-acid chain; its full sequence is Protein DEHYDRATION-INDUCED 19 homolog 7 (211 aa).

Thr-113 bears the Phosphothreonine mark. The tract at residues 163–194 (GDSVAQVSPKDTSKSKIQQESFSNEDQEKAKK) is disordered. The segment covering 167 to 186 (AQVSPKDTSKSKIQQESFSN) has biased composition (polar residues).

It belongs to the Di19 family. In terms of processing, not phosphorylated in vitro by CPK3 or CPK11. As to expression, expressed in seedlings, roots, leaves, stems, flowers and siliques.

The protein localises to the nucleus. Its function is as follows. Involved in both red and blue light signaling. This Arabidopsis thaliana (Mouse-ear cress) protein is Protein DEHYDRATION-INDUCED 19 homolog 7 (DI19-7).